The sequence spans 416 residues: Alpha-1,3/1,6-mannosyltransferase ALG2 (416 aa).

The Cytoplasmic portion of the chain corresponds to 1–84 (MAEEQGRERD…LPRGLGWGGR (84 aa)). An intramembrane region (helical) is located at residues 85-105 (GAAVCAYVRMVFLALYVLFLA). Residues 106–416 (DEEFDVVVCD…LYRYVTKLLV (311 aa)) are Cytoplasmic-facing.

This sequence belongs to the glycosyltransferase group 1 family. Glycosyltransferase 4 subfamily.

It localises to the endoplasmic reticulum membrane. It catalyses the reaction a beta-D-Man-(1-&gt;4)-beta-D-GlcNAc-(1-&gt;4)-alpha-D-GlcNAc-diphospho-di-trans,poly-cis-dolichol + GDP-alpha-D-mannose = an alpha-D-Man-(1-&gt;3)-beta-D-Man-(1-&gt;4)-beta-D-GlcNAc-(1-&gt;4)-alpha-D-GlcNAc-diphospho-di-trans,poly-cis-dolichol + GDP + H(+). The enzyme catalyses an alpha-D-Man-(1-&gt;3)-beta-D-Man-(1-&gt;4)-beta-D-GlcNAc-(1-&gt;4)-alpha-D-GlcNAc-diphospho-di-trans,poly-cis-dolichol + GDP-alpha-D-mannose = an alpha-D-Man-(1-&gt;3)-[alpha-D-Man-(1-&gt;6)]-beta-D-Man-(1-&gt;4)-beta-D-GlcNAc-(1-&gt;4)-alpha-D-GlcNAc-diphospho-di-trans,poly-cis-dolichol + GDP + H(+). The catalysed reaction is a beta-D-Man-(1-&gt;4)-beta-D-GlcNAc-(1-&gt;4)-alpha-D-GlcNAc-diphospho-di-trans,poly-cis-dolichol + GDP-alpha-D-mannose = an alpha-D-Man-(1-&gt;6)-beta-D-Man-(1-&gt;4)-beta-D-GlcNAc-(1-&gt;4)-alpha-D-GlcNAc-diphospho-di-trans,poly-cis-dolichol + GDP + H(+). It carries out the reaction an alpha-D-Man-(1-&gt;6)-beta-D-Man-(1-&gt;4)-beta-D-GlcNAc-(1-&gt;4)-alpha-D-GlcNAc-diphospho-di-trans,poly-cis-dolichol + GDP-alpha-D-mannose = an alpha-D-Man-(1-&gt;3)-[alpha-D-Man-(1-&gt;6)]-beta-D-Man-(1-&gt;4)-beta-D-GlcNAc-(1-&gt;4)-alpha-D-GlcNAc-diphospho-di-trans,poly-cis-dolichol + GDP + H(+). The protein operates within protein modification; protein glycosylation. Functionally, mannosyltransferase that operates in the biosynthetic pathway of dolichol-linked oligosaccharides, the glycan precursors employed in protein asparagine (N)-glycosylation. The assembly of dolichol-linked oligosaccharides begins on the cytosolic side of the endoplasmic reticulum membrane and finishes in its lumen. The sequential addition of sugars to dolichol pyrophosphate produces dolichol-linked oligosaccharides containing fourteen sugars, including two GlcNAcs, nine mannoses and three glucoses. Once assembled, the oligosaccharide is transferred from the lipid to nascent proteins by oligosaccharyltransferases. Catalyzes, on the cytoplasmic face of the endoplasmic reticulum, the addition of the second and third mannose residues to the dolichol-linked oligosaccharide chain, to produce Man3GlcNAc(2)-PP-dolichol core oligosaccharide. Man3GlcNAc(2)-PP-dolichol is a substrate for ALG11, the following enzyme in the biosynthetic pathway. While both alpha 1,3 and alpha 1,6 linkages are possible, the sequential addition of alpha 1,3 followed by alpha 1,6 is probably the preferred route. In Homo sapiens (Human), this protein is Alpha-1,3/1,6-mannosyltransferase ALG2 (ALG2).